The sequence spans 357 residues: Protein RecA (357 aa).

Residue 67 to 74 participates in ATP binding; it reads GPESSGKT.

This sequence belongs to the RecA family.

The protein localises to the cytoplasm. In terms of biological role, can catalyze the hydrolysis of ATP in the presence of single-stranded DNA, the ATP-dependent uptake of single-stranded DNA by duplex DNA, and the ATP-dependent hybridization of homologous single-stranded DNAs. It interacts with LexA causing its activation and leading to its autocatalytic cleavage. The protein is Protein RecA of Shewanella oneidensis (strain ATCC 700550 / JCM 31522 / CIP 106686 / LMG 19005 / NCIMB 14063 / MR-1).